The following is a 476-amino-acid chain: MYLYNTLTGRKEEFTPVEPGRVRMYVCGPTTYNYIHLGNARPMVVFDTLRRYLEYRNYDVLYVQNFTDIDDKVINRAREEHQAPLVIAERYIEEFFKDADALNVKRATLYPRVSQHIDAIIAAIATLVERGFAYVADGDVYFEVEKFPAYGRLSKRTPGEMRAGARVEVNTSKRNPLDFALWKAACPGEPSWESPWGPGRPGWHIECSTMALKYLGPGFDIHGGGADLIFPHHENEIAQAEAQTGCTFARFWLHNGFITVNQEKMSKSKGNFFLVRDILKRFRPLAVRLYLLATHYRSPIDFDDAGLLAAERGLERLENTRRLLGEARCQLTGTGAETTVPARTSALAGRAEELRQEFISAMDDDFNTARALAALYDLAREINSYLNGTTTIDPAALRTAAITFEQLGGEVLGLFGQARQQVDDELLSGLMDLILQVRQEARQRRDWATADTIRDRLKELGIVLEDTPRGPRWKRS.

A Zn(2+)-binding site is contributed by Cys-27. Positions 29-39 (PTTYNYIHLGN) match the 'HIGH' region motif. Zn(2+)-binding residues include Cys-207, His-232, and Glu-236. The short motif at 264–268 (KMSKS) is the 'KMSKS' region element. Lys-267 contacts ATP.

The protein belongs to the class-I aminoacyl-tRNA synthetase family. As to quaternary structure, monomer. Zn(2+) is required as a cofactor.

It is found in the cytoplasm. It catalyses the reaction tRNA(Cys) + L-cysteine + ATP = L-cysteinyl-tRNA(Cys) + AMP + diphosphate. The protein is Cysteine--tRNA ligase of Moorella thermoacetica (strain ATCC 39073 / JCM 9320).